The primary structure comprises 188 residues: PRA1 family protein F3 (188 aa).

Helical transmembrane passes span 74-94 (IVVL…LIVF), 95-115 (TVLV…IKLF), 123-143 (TVLI…NATF), and 145-165 (IVGA…VRKT).

It belongs to the PRA1 family. Interacts with PRA1F2 and PRA1D. Interacts with ACD11 and BPA1. Expressed in lateral roots, lateral root caps and columella cells.

It localises to the endoplasmic reticulum membrane. It is found in the membrane. Its subcellular location is the cytoplasm. In terms of biological role, may be involved in both secretory and endocytic intracellular trafficking in the endosomal/prevacuolar compartments. The protein is PRA1 family protein F3 of Arabidopsis thaliana (Mouse-ear cress).